The chain runs to 1440 residues: Bridge-like lipid transfer protein family member 3A (1440 aa).

Residues 3–95 (GIIKKQILKH…KVEVEMKTCE (93 aa)) form the Chorein N-terminal domain. 3 disordered regions span residues 267 to 307 (SAHQ…NSSS), 430 to 456 (ADSL…FQPP), and 751 to 780 (KPSA…TEHD). Residues 287–307 (SAQQSWAQAFGGSQGNSNSSS) show a composition bias toward low complexity. 4 positions are modified to phosphoserine: Ser444, Ser446, Ser755, and Ser758. A coiled-coil region spans residues 837 to 860 (ALLRLKEVLQRLQEQLTKDTESMT). The tract at residues 891–1008 (VDADSAGSDS…ETAVNGQGEL (118 aa)) is disordered. The segment covering 911-920 (SEDRELKSDA) has biased composition (basic and acidic residues). Residues 985–995 (ASSSPAALKPP) are compositionally biased toward low complexity. Phosphoserine occurs at positions 988, 1103, and 1106. Residues 1106–1180 (SFDGVSLDSS…SPAANSSVSP (75 aa)) form a disordered region. Over residues 1134–1150 (LLESESGPESVPPGSLS) the composition is skewed to low complexity. Residues 1151–1180 (NVSDNAGVQGSPLVNNYGQGSPAANSSVSP) show a composition bias toward polar residues. Residues 1401 to 1435 (KELPILQKELIETKQALANANQDKEKLLQEIRKYN) are a coiled coil.

In terms of assembly, homodimer (Potential). Interacts with UHRF1.

The protein resides in the late endosome. In terms of biological role, tube-forming lipid transport protein which probably mediates the transfer of lipids between membranes at organelle contact sites. May be involved in the retrograde traffic of vesicle clusters in the endocytic pathway to the Golgi complex. The sequence is that of Bridge-like lipid transfer protein family member 3A from Homo sapiens (Human).